A 110-amino-acid chain; its full sequence is PCNA-associated factor (110 aa).

K15 participates in a covalent cross-link: Glycyl lysine isopeptide (Lys-Gly) (interchain with G-Cter in ubiquitin). The D-box signature appears at 23 to 34 (RKVLGSSTFVTN). K24 is modified (N6-acetyllysine; alternate). Residue K24 forms a Glycyl lysine isopeptide (Lys-Gly) (interchain with G-Cter in ubiquitin); alternate linkage. 2 positions are modified to phosphoserine: S28 and S71. Positions 28–39 (SSTFVTNSSSSS) are enriched in low complexity. A disordered region spans residues 28-110 (SSTFVTNSSS…QPDHRDDENE (83 aa)). The PIP-box motif lies at 61–71 (QKGIGEFFRLS). The segment covering 71–80 (SPKESKKENQ) has biased composition (basic and acidic residues). The KEN box motif lies at 77 to 79 (KEN). An Initiation motif motif is present at residues 84 to 96 (EAGTSGLGKAKRK).

Interacts (when monoubiquitinated at Lys-15 and Lys-24) with PCNA. Interacts with isoform 2/p33ING1b of ING1. Interacts with BRCA1. Monoubiquitinated at Lys-15 and Lys-24 during normal S phase, promoting its association with PCNA. Also diubiquitinated at these 2 sites. Following DNA damage, monoubiquitin chains at Lys-15 and Lys-24 are probably extended, leading to disrupt the interaction with PCNA. Polyubiquitinated by the APC/C complex at the mitotic exit, leading to its degradation by the proteasome.

Its subcellular location is the nucleus. It is found in the cytoplasm. It localises to the perinuclear region. Its function is as follows. PCNA-binding protein that acts as a regulator of DNA repair during DNA replication. Following DNA damage, the interaction with PCNA is disrupted, facilitating the interaction between monoubiquitinated PCNA and the translesion DNA synthesis DNA polymerase eta (POLH) at stalled replisomes, facilitating the bypass of replication-fork-blocking lesions. Also acts as a regulator of centrosome number. The polypeptide is PCNA-associated factor (Mus musculus (Mouse)).